Reading from the N-terminus, the 187-residue chain is Cytochrome b-245 chaperone 1 (187 aa).

A helical transmembrane segment spans residues Gly-20–Gly-42. Positions Glu-167 to Ser-187 are disordered. Residues Ser-168 and Ser-170 each carry the phosphoserine modification.

Belongs to the CYBC1 family. As to quaternary structure, interacts with CYBB; CYBC1 may act as a chaperone stabilizing Cytochrome b-245 heterodimer.

The protein resides in the endoplasmic reticulum membrane. Functions as a chaperone necessary for a stable expression of the CYBA and CYBB subunits of the cytochrome b-245 heterodimer. Controls the phagocyte respiratory burst and is essential for innate immunity. The polypeptide is Cytochrome b-245 chaperone 1 (Mus musculus (Mouse)).